The primary structure comprises 427 residues: Glutamate-1-semialdehyde 2,1-aminomutase (427 aa).

The residue at position 265 (lysine 265) is an N6-(pyridoxal phosphate)lysine.

This sequence belongs to the class-III pyridoxal-phosphate-dependent aminotransferase family. HemL subfamily. As to quaternary structure, homodimer. The cofactor is pyridoxal 5'-phosphate.

The protein localises to the cytoplasm. It carries out the reaction (S)-4-amino-5-oxopentanoate = 5-aminolevulinate. Its pathway is porphyrin-containing compound metabolism; protoporphyrin-IX biosynthesis; 5-aminolevulinate from L-glutamyl-tRNA(Glu): step 2/2. The polypeptide is Glutamate-1-semialdehyde 2,1-aminomutase (Bordetella avium (strain 197N)).